A 503-amino-acid polypeptide reads, in one-letter code: ATP synthase subunit beta (503 aa).

157 to 164 (GGAGVGKT) lines the ATP pocket.

This sequence belongs to the ATPase alpha/beta chains family. In terms of assembly, F-type ATPases have 2 components, CF(1) - the catalytic core - and CF(0) - the membrane proton channel. CF(1) has five subunits: alpha(3), beta(3), gamma(1), delta(1), epsilon(1). CF(0) has three main subunits: a(1), b(2) and c(9-12). The alpha and beta chains form an alternating ring which encloses part of the gamma chain. CF(1) is attached to CF(0) by a central stalk formed by the gamma and epsilon chains, while a peripheral stalk is formed by the delta and b chains.

Its subcellular location is the cell inner membrane. The enzyme catalyses ATP + H2O + 4 H(+)(in) = ADP + phosphate + 5 H(+)(out). Produces ATP from ADP in the presence of a proton gradient across the membrane. The catalytic sites are hosted primarily by the beta subunits. This is ATP synthase subunit beta from Flavobacterium psychrophilum (strain ATCC 49511 / DSM 21280 / CIP 103535 / JIP02/86).